The primary structure comprises 406 residues: Calsequestrin-1 (406 aa).

Positions 1-34 (MRATDRMGARAVSKLRLALLFVLVLGTPRSGVQG) are cleaved as a signal peptide. At Tyr-43 the chain carries Phosphotyrosine. Ser-81 carries the post-translational modification Phosphoserine. Thr-124 is modified (phosphothreonine). A Phosphoserine modification is found at Ser-216. Residue Asn-350 is glycosylated (N-linked (GlcNAc...) asparagine). The tract at residues 382–406 (EGEINTEDDDDDDDDDDDDDDDDDD) is disordered.

The protein belongs to the calsequestrin family. As to quaternary structure, monomer; increases in response to a depletion of intracellular calcium. Homodimer. Homotetramer and homopolymer. Can form linear homooligomers. Ca(2+) ions promote oligomerization. Interacts (via C-terminal end and preferentially with the monomeric form) with STIM1; this interaction increases in response to a depletion of intracellular calcium, decreases both STIM1 aggregation and clustering, interaction of STIM1 with ORAI1 and store-operated Ca(2+) entry (SOCE) activity. Interacts with ASPH and TRDN. Post-translationally, N-glycosylated. In terms of tissue distribution, detected in skeletal muscle and in smooth muscle from vas deferens, aorta and stomach (at protein level).

It is found in the endoplasmic reticulum. It localises to the sarcoplasmic reticulum. The protein resides in the sarcoplasmic reticulum lumen. Its subcellular location is the sarcoplasmic reticulum membrane. The protein localises to the mitochondrion matrix. In terms of biological role, calsequestrin is a high-capacity, moderate affinity, calcium-binding protein and thus acts as an internal calcium store in muscle. Calcium ions are bound by clusters of acidic residues at the protein surface, often at the interface between subunits. Can bind around 80 Ca(2+) ions. Regulates the release of lumenal Ca(2+) via the calcium release channel RYR1; this plays an important role in triggering muscle contraction. Negatively regulates store-operated Ca(2+) entry (SOCE) activity. In Rattus norvegicus (Rat), this protein is Calsequestrin-1 (Casq1).